A 181-amino-acid chain; its full sequence is Alkyl hydroperoxide reductase AhpD (181 aa).

Residue Cys-131 is the Proton donor of the active site. Cys-131 and Cys-134 are disulfide-bonded. The active-site Cysteine sulfenic acid (-SOH) intermediate is Cys-134.

This sequence belongs to the AhpD family.

It catalyses the reaction N(6)-[(R)-dihydrolipoyl]-L-lysyl-[lipoyl-carrier protein] + a hydroperoxide = N(6)-[(R)-lipoyl]-L-lysyl-[lipoyl-carrier protein] + an alcohol + H2O. Functionally, antioxidant protein with alkyl hydroperoxidase activity. Required for the reduction of the AhpC active site cysteine residues and for the regeneration of the AhpC enzyme activity. The polypeptide is Alkyl hydroperoxide reductase AhpD (Bradyrhizobium sp. (strain BTAi1 / ATCC BAA-1182)).